The chain runs to 343 residues: Isopentenyl-diphosphate delta-isomerase (343 aa).

6 to 7 contacts substrate; it reads RK. Residues serine 63, 64–66, serine 94, and asparagine 122 each bind FMN; that span reads SMT. Residue 94–96 participates in substrate binding; that stretch reads SMR. A substrate-binding site is contributed by glutamine 157. Residue glutamate 158 coordinates Mg(2+). Residues lysine 189, threonine 219, 269 to 271, and 290 to 291 each bind FMN; these read GLK and AG.

The protein belongs to the IPP isomerase type 2 family. Homooctamer. Dimer of tetramers. Requires FMN as cofactor. The cofactor is NADPH. Mg(2+) is required as a cofactor.

It is found in the cytoplasm. It carries out the reaction isopentenyl diphosphate = dimethylallyl diphosphate. Its function is as follows. Involved in the biosynthesis of isoprenoids. Catalyzes the 1,3-allylic rearrangement of the homoallylic substrate isopentenyl (IPP) to its allylic isomer, dimethylallyl diphosphate (DMAPP). In Rickettsia bellii (strain OSU 85-389), this protein is Isopentenyl-diphosphate delta-isomerase.